We begin with the raw amino-acid sequence, 432 residues long: Adenylosuccinate lyase (432 aa).

Residues 4-5 (RY), 67-69 (RHD), and 93-94 (TS) contribute to the N(6)-(1,2-dicarboxyethyl)-AMP site. H141 (proton donor/acceptor) is an active-site residue. Q212 contacts N(6)-(1,2-dicarboxyethyl)-AMP. S262 functions as the Proton donor/acceptor in the catalytic mechanism. Residues S263, 268 to 270 (KRN), N276, and 307 to 311 (SAERI) each bind N(6)-(1,2-dicarboxyethyl)-AMP.

Belongs to the lyase 1 family. Adenylosuccinate lyase subfamily. In terms of assembly, homodimer and homotetramer. Residues from neighboring subunits contribute catalytic and substrate-binding residues to each active site.

It carries out the reaction N(6)-(1,2-dicarboxyethyl)-AMP = fumarate + AMP. It catalyses the reaction (2S)-2-[5-amino-1-(5-phospho-beta-D-ribosyl)imidazole-4-carboxamido]succinate = 5-amino-1-(5-phospho-beta-D-ribosyl)imidazole-4-carboxamide + fumarate. The protein operates within purine metabolism; AMP biosynthesis via de novo pathway; AMP from IMP: step 2/2. Its pathway is purine metabolism; IMP biosynthesis via de novo pathway; 5-amino-1-(5-phospho-D-ribosyl)imidazole-4-carboxamide from 5-amino-1-(5-phospho-D-ribosyl)imidazole-4-carboxylate: step 2/2. In terms of biological role, catalyzes two reactions in de novo purine nucleotide biosynthesis. Catalyzes the breakdown of 5-aminoimidazole- (N-succinylocarboxamide) ribotide (SAICAR or 2-[5-amino-1-(5-phospho-beta-D-ribosyl)imidazole-4-carboxamido]succinate) to 5-aminoimidazole-4-carboxamide ribotide (AICAR or 5-amino-1-(5-phospho-beta-D-ribosyl)imidazole-4-carboxamide) and fumarate, and of adenylosuccinate (ADS or N(6)-(1,2-dicarboxyethyl)-AMP) to adenosine monophosphate (AMP) and fumarate. The protein is Adenylosuccinate lyase (purB) of Streptococcus mutans serotype c (strain ATCC 700610 / UA159).